The sequence spans 271 residues: uncharacterized protein (271 aa).

Disordered stretches follow at residues lysine 50–leucine 93 and lysine 128–valine 233. Low complexity-rich tracts occupy residues serine 61–leucine 93 and asparagine 129–asparagine 165. Residues threonine 169–asparagine 179 are compositionally biased toward basic and acidic residues. Acidic residues-rich tracts occupy residues glutamate 180–glutamate 199 and methionine 207–glutamate 217.

This is an uncharacterized protein from Dictyostelium discoideum (Social amoeba).